Here is a 764-residue protein sequence, read N- to C-terminus: Semaphorin-3D (764 aa).

The first 41 residues, 1 to 41 (MKTAGEPDRRRQRRQVRTGRFSCAWWSTSVMLFFSLPEGNC), serve as a signal peptide directing secretion. The Sema domain maps to 48–535 (RVKLGYKDLI…GSDGLVQVSL (488 aa)). Cysteines 121 and 132 form a disulfide. Asn-143 is a glycosylation site (N-linked (GlcNAc...) asparagine). 3 disulfides stabilise this stretch: Cys-150–Cys-159, Cys-290–Cys-402, and Cys-314–Cys-362. N-linked (GlcNAc...) asparagine glycosylation occurs at Asn-490. Cys-538 and Cys-556 are disulfide-bonded. Asn-610 carries an N-linked (GlcNAc...) asparagine glycan. The 80-residue stretch at 661 to 740 (GDAGSYFCTS…EYCETMWHRE (80 aa)) folds into the Ig-like C2-type domain. Cys-668 and Cys-733 form a disulfide bridge. The disordered stretch occupies residues 743-764 (QKQKGKWKHVQELRKSRNRRHH).

It belongs to the semaphorin family.

It localises to the secreted. Its function is as follows. May play a role in the guidance of several axon pathways. The polypeptide is Semaphorin-3D (sema3d) (Danio rerio (Zebrafish)).